Reading from the N-terminus, the 447-residue chain is MTRKLFGTDGVRGRANSYPMTAEVALRLGAAAGRYFRPVGAGSPRVVIGKDTRLSGYMLENALTAGLTSTGMNVLLLGPVPTPAVGFLTRSMRADLGVMISASHNPHEDNGIKFFGPDGFKLSDEAEAEIEAILAGEIQPAQPGNIGRAKRIDDGRGRYQEYCKTTFPAGLRLDGLKVVIDCANGAAYRAAPEVLWELGAEVIPLGVEPDGKNINLRCGSTHPEAAAEAVRAHGADVGICLDGDADRVIILDEQGRQADGDQIMALFAARWAEEGRLRDATLVATVMSNLGLERFLSARGLRLERTPVGDRYVVEAMRRGGWNLGGEQSGHIVMTDFATTGDGLLAGLQFLAAMAQTGRKASELSRSFETVPQLLQNVRYAAGQEPLTAPSVQAVIREAEVRLNGSGRLLIRKSGTEPLIRVMAECEDEALLRDVVEEIVAAVKDAA.

Residue S103 is the Phosphoserine intermediate of the active site. 4 residues coordinate Mg(2+): S103, D242, D244, and D246. S103 bears the Phosphoserine mark.

The protein belongs to the phosphohexose mutase family. Requires Mg(2+) as cofactor. In terms of processing, activated by phosphorylation.

It catalyses the reaction alpha-D-glucosamine 1-phosphate = D-glucosamine 6-phosphate. Functionally, catalyzes the conversion of glucosamine-6-phosphate to glucosamine-1-phosphate. In Cereibacter sphaeroides (strain ATCC 17025 / ATH 2.4.3) (Rhodobacter sphaeroides), this protein is Phosphoglucosamine mutase.